A 514-amino-acid polypeptide reads, in one-letter code: RNA polymerase sigma factor SigA (514 aa).

Residues 135-159 show a composition bias toward basic residues; it reads AAKKATAKKAAAKKTTAKKTAAKKS. The segment at 135-205 is disordered; that stretch reads AAKKATAKKA…SDDDEDDAPA (71 aa). Residues 281 to 351 form a sigma-70 factor domain-2 region; the sequence is LLEANLRLVV…TRAMADQART (71 aa). Positions 305 to 308 match the Interaction with polymerase core subunit RpoC motif; it reads DLIQ. Positions 360–436 are sigma-70 factor domain-3; that stretch reads EVINKLARVQ…DSEAVVPADA (77 aa). A sigma-70 factor domain-4 region spans residues 449-502; it reads VLDTLSEREAGVVSMRFGLTDGQPKTLDEIGKVYGVTRERIRQIESKTMSKLRH. Positions 475–494 form a DNA-binding region, H-T-H motif; the sequence is LDEIGKVYGVTRERIRQIES.

It belongs to the sigma-70 factor family. RpoD/SigA subfamily. In terms of assembly, interacts transiently with the RNA polymerase catalytic core.

The protein resides in the cytoplasm. Sigma factors are initiation factors that promote the attachment of RNA polymerase to specific initiation sites and are then released. This sigma factor is the primary sigma factor during exponential growth. This Streptomyces griseus protein is RNA polymerase sigma factor SigA.